A 124-amino-acid polypeptide reads, in one-letter code: Small ribosomal subunit protein uS13 (124 aa).

The tract at residues 98-124 is disordered; that stretch reads VRGQRTRCNARTRKGPRKTVGAKRKEK.

This sequence belongs to the universal ribosomal protein uS13 family. In terms of assembly, part of the 30S ribosomal subunit. Forms a loose heterodimer with protein S19. Forms two bridges to the 50S subunit in the 70S ribosome.

Its function is as follows. Located at the top of the head of the 30S subunit, it contacts several helices of the 16S rRNA. In the 70S ribosome it contacts the 23S rRNA (bridge B1a) and protein L5 of the 50S subunit (bridge B1b), connecting the 2 subunits; these bridges are implicated in subunit movement. Contacts the tRNAs in the A and P-sites. This chain is Small ribosomal subunit protein uS13, found in Dictyoglomus turgidum (strain DSM 6724 / Z-1310).